Here is a 344-residue protein sequence, read N- to C-terminus: Anthranilate phosphoribosyltransferase (344 aa).

Residues Gly-84, 87–88 (GD), Thr-92, 94–97 (NIST), 112–120 (KHGGRSVSS), and Ser-124 each bind 5-phospho-alpha-D-ribose 1-diphosphate. Anthranilate is bound at residue Gly-84. Ser-96 serves as a coordination point for Mg(2+). Arg-170 provides a ligand contact to anthranilate. The Mg(2+) site is built by Asp-229 and Glu-230.

Belongs to the anthranilate phosphoribosyltransferase family. In terms of assembly, homodimer. Requires Mg(2+) as cofactor.

It catalyses the reaction N-(5-phospho-beta-D-ribosyl)anthranilate + diphosphate = 5-phospho-alpha-D-ribose 1-diphosphate + anthranilate. The protein operates within amino-acid biosynthesis; L-tryptophan biosynthesis; L-tryptophan from chorismate: step 2/5. Catalyzes the transfer of the phosphoribosyl group of 5-phosphorylribose-1-pyrophosphate (PRPP) to anthranilate to yield N-(5'-phosphoribosyl)-anthranilate (PRA). The protein is Anthranilate phosphoribosyltransferase of Janthinobacterium sp. (strain Marseille) (Minibacterium massiliensis).